Consider the following 118-residue polypeptide: Large ribosomal subunit protein bL20 (118 aa).

Belongs to the bacterial ribosomal protein bL20 family.

Functionally, binds directly to 23S ribosomal RNA and is necessary for the in vitro assembly process of the 50S ribosomal subunit. It is not involved in the protein synthesizing functions of that subunit. This chain is Large ribosomal subunit protein bL20, found in Cyanothece sp. (strain PCC 7425 / ATCC 29141).